The sequence spans 1574 residues: Sterol 3-beta-glucosyltransferase (1574 aa).

A compositionally biased stretch (polar residues) spans 37-48 (TFLNQNPASPNN). Disordered regions lie at residues 37 to 61 (TFLN…NKDE) and 102 to 170 (ASNA…HSKL). Basic and acidic residues-rich tracts occupy residues 107–121 (EAKD…RSSR) and 128–138 (PEYRREYKLDY). Positions 139–148 (DIDESEEDDI) are enriched in acidic residues. The span at 149 to 170 (ESTRDENTLKPKTEDTSVHSKL) shows a compositional bias: basic and acidic residues. A GRAM 1 domain is found at 253 to 288 (DKLKRVFELNDDDYFYGNYNVWLVRDVLLQGHIYLT). Residues 323-471 (DVIQSGSLGM…WVNNIVKVVF (149 aa)) form the PH domain. 4 disordered regions span residues 389–413 (GRND…SGDE), 538–559 (RMKK…GNEP), 651–722 (ASHR…PVQG), and 774–806 (DALS…KKKN). A compositionally biased stretch (polar residues) spans 692–701 (ITPSKIFSNK). Over residues 702–711 (SRTESEKSTP) the composition is skewed to basic and acidic residues. Positions 712–722 (DRSQTTSPVQG) are enriched in polar residues. One can recognise a GRAM 2 domain in the interval 854–920 (RHFQERFSFN…IDVDTCSKEK (67 aa)). Over residues 964–976 (RESGNESSDDNKS) the composition is skewed to basic and acidic residues. The segment at 964–996 (RESGNESSDDNKSAQHGKSGCFQKTPSSAETTK) is disordered. Positions 985 to 996 (FQKTPSSAETTK) are enriched in polar residues. Residues S1057, R1058, D1060, N1333, I1364, H1366, H1379, S1382, G1383, T1384, D1403, and Q1404 each coordinate UDP-alpha-D-glucose. The segment at 1505-1574 (DSDTYDADHD…DNTTVTDANK (70 aa)) is disordered. Over residues 1510–1533 (DADHDSDKESDHDQTYEQDNHSDY) the composition is skewed to basic and acidic residues. Positions 1563 to 1574 (GNDNTTVTDANK) are enriched in polar residues.

This sequence belongs to the glycosyltransferase 28 family.

It localises to the cytoplasm. The protein resides in the membrane. The enzyme catalyses a sterol + UDP-alpha-D-glucose = a sterol 3-beta-D-glucoside + UDP + H(+). It carries out the reaction ergosterol + UDP-alpha-D-glucose = ergosteryl 3-beta-D-glucoside + UDP + H(+). Functionally, sterol glycosyltransferase responsible for the glycosylation of ergosterol to form ergosterol-glucoside. This Debaryomyces hansenii (strain ATCC 36239 / CBS 767 / BCRC 21394 / JCM 1990 / NBRC 0083 / IGC 2968) (Yeast) protein is Sterol 3-beta-glucosyltransferase.